A 439-amino-acid polypeptide reads, in one-letter code: Trehalose-phosphatase (439 aa).

Residues D163 and D165 each contribute to the Mg(2+) site. D165 functions as the Proton donor/acceptor in the catalytic mechanism. A substrate-binding site is contributed by 282–284 (QRK). A Mg(2+)-binding site is contributed by D373.

The protein belongs to the gob-1 trehalose phosphatase family. Mg(2+) serves as cofactor. In terms of tissue distribution, ubiquitously expressed. Strong expression in intestine.

It carries out the reaction alpha,alpha-trehalose 6-phosphate + H2O = alpha,alpha-trehalose + phosphate. In terms of biological role, catalyzes the hydrolysis of trehalose 6-phosphate to trehalose and phosphate; prevents the accumulation of toxic levels of trehalose 6-phosphate. The sequence is that of Trehalose-phosphatase from Caenorhabditis elegans.